A 459-amino-acid chain; its full sequence is UDP-N-acetylmuramate--L-alanine ligase (459 aa).

118–124 is an ATP binding site; the sequence is GTHGKTT.

Belongs to the MurCDEF family.

It localises to the cytoplasm. The catalysed reaction is UDP-N-acetyl-alpha-D-muramate + L-alanine + ATP = UDP-N-acetyl-alpha-D-muramoyl-L-alanine + ADP + phosphate + H(+). It functions in the pathway cell wall biogenesis; peptidoglycan biosynthesis. Functionally, cell wall formation. This is UDP-N-acetylmuramate--L-alanine ligase from Agathobacter rectalis (strain ATCC 33656 / DSM 3377 / JCM 17463 / KCTC 5835 / VPI 0990) (Eubacterium rectale).